We begin with the raw amino-acid sequence, 401 residues long: uncharacterized protein (401 aa).

[4Fe-4S] cluster is bound by residues cysteine 7, cysteine 13, cysteine 16, and cysteine 94. S-adenosyl-L-methionine contacts are provided by glutamine 230, tyrosine 259, glutamate 280, and aspartate 328. Cysteine 355 serves as the catalytic Nucleophile.

This sequence belongs to the class I-like SAM-binding methyltransferase superfamily. RNA M5U methyltransferase family.

This is an uncharacterized protein from Chlamydia caviae (strain ATCC VR-813 / DSM 19441 / 03DC25 / GPIC) (Chlamydophila caviae).